Consider the following 472-residue polypeptide: Violaxanthin de-epoxidase, chloroplastic (472 aa).

6 cysteine pairs are disulfide-bonded: C133-C151, C138-C145, C157-C174, C161-C170, C189-C196, and C242-C372. Residues 379–462 (VERLEKTVEE…MEAGEVEKLF (84 aa)) are a coiled coil.

It belongs to the calycin superfamily. Lipocalin family. Post-translationally, disulfide bonds. Reduction of the disulfides results in loss of a rigid structure, a decrease in thermal stability of 15 degrees Celsius and a loss of activity.

The protein resides in the plastid. The protein localises to the chloroplast thylakoid membrane. The catalysed reaction is all-trans-violaxanthin + 2 L-ascorbate = all-trans-zeaxanthin + 2 L-dehydroascorbate + 2 H2O. Its activity is regulated as follows. Irreversibly inhibited by DTT and iodoacetamide at pH 5.7 or pH 5.2, but not at pH 7.2. Regulated through Ca(2+) gating of H(+) flux at the CFoH(+) channel. Requires the presence of lipids forming reverse hexagonal structures such as monogalactosyldiacylglyceride (MGDG) or phosphatidylethanolamine. A negative curvature elastic stress in the thylakoid lipid bilayer is required for VDE1 activity. In terms of biological role, part of the xanthophyll (or violaxanthin) cycle for controlling the concentration of zeaxanthin in chloroplasts. Catalyzes the two-step mono de-epoxidation reaction. Stereospecific for all-trans xanthophylls. Zeaxanthin induces the dissipation of excitation energy in the chlorophyll of the light-harvesting protein complex of photosystem II. The sequence is that of Violaxanthin de-epoxidase, chloroplastic from Spinacia oleracea (Spinach).